A 274-amino-acid polypeptide reads, in one-letter code: 2,3,4,5-tetrahydropyridine-2,6-dicarboxylate N-succinyltransferase (274 aa).

The substrate site is built by Arg106 and Asp143.

Belongs to the transferase hexapeptide repeat family. In terms of assembly, homotrimer.

It localises to the cytoplasm. It carries out the reaction (S)-2,3,4,5-tetrahydrodipicolinate + succinyl-CoA + H2O = (S)-2-succinylamino-6-oxoheptanedioate + CoA. It functions in the pathway amino-acid biosynthesis; L-lysine biosynthesis via DAP pathway; LL-2,6-diaminopimelate from (S)-tetrahydrodipicolinate (succinylase route): step 1/3. The protein is 2,3,4,5-tetrahydropyridine-2,6-dicarboxylate N-succinyltransferase of Rickettsia felis (strain ATCC VR-1525 / URRWXCal2) (Rickettsia azadi).